The following is a 258-amino-acid chain: Sugar fermentation stimulation protein homolog (258 aa).

Belongs to the SfsA family.

This chain is Sugar fermentation stimulation protein homolog, found in Prochlorococcus marinus (strain NATL2A).